We begin with the raw amino-acid sequence, 113 residues long: Dynein light chain Tctex-type 1 (113 aa).

The residue at position 1 (M1) is an N-acetylmethionine. The interval Q41–I113 is interaction with GNB1.

This sequence belongs to the dynein light chain Tctex-type family. In terms of assembly, homodimer. The cytoplasmic dynein 1 complex consists of two catalytic heavy chains (HCs) and a number of non-catalytic subunits presented by intermediate chains (ICs), light intermediate chains (LICs) and light chains (LCs); the composition seems to vary in respect to the IC, LIC and LC composition. The heavy chain homodimer serves as a scaffold for the probable homodimeric assembly of the respective non-catalytic subunits. The ICs and LICs bind directly to the HC dimer and dynein LCs assemble on the IC dimer. DYNLT1 and DYNLT3 compete for association with dynein IC (DYNC1I1 or DYNC1I2). Self-associates. Interacts with RHO. Interacts with DYNC1I1 and DYNC1I2. Interacts with DOC2A, DOC2B and SCN10A. Interacts with PVR. Interacts with SVIL isoform 2. Interacts with GNB1; the interaction occurs in presence of guanine nucleotide-binding protein G(T) subunit gamma; the interaction diminishes the association of DYNLT1 with dynein IC (DYNC1I1 or DYNC1I2). Interacts with GNB2, GNB3 and GNB5; the interactions occur in presence of guanine nucleotide-binding protein G(T) subunit gamma. Interacts with ACVR2B and ARHGEF2. Interacts with DNAI4. Interacts with CFAP61. Phosphorylated by BMPR2. The phosphorylation status is proposed to regulate the association with the cytoplasmic dynein complex and may have role in cytoplasmic dynein cargo release.

The protein localises to the golgi apparatus. It localises to the cytoplasm. It is found in the cytoskeleton. The protein resides in the spindle. Acts as one of several non-catalytic accessory components of the cytoplasmic dynein 1 complex that are thought to be involved in linking dynein to cargos and to adapter proteins that regulate dynein function. Cytoplasmic dynein 1 acts as a motor for the intracellular retrograde motility of vesicles and organelles along microtubules. Binds to transport cargos and is involved in apical cargo transport such as rhodopsin-bearing vesicles in polarized epithelia. Is involved in intracellular targeting of D-type retrovirus gag polyproteins to the cytoplasmic assembly site. May also be a accessory component of axonemal dynein. In terms of biological role, plays a role in neuronal morphogenesis; the function is independent of cytoplasmic dynein and seems to be coupled to regulation of the actin cytoskeleton by enhancing Rac1 activity. Required for neurite outgrowth. The function in neurogenesis may be regulated by association with a G-protein beta-gamma dimer. May function as a receptor-independent activator of heterotrimeric G-protein signaling; the activation appears to be independent of a nucleotide exchange. Plays a role in regulating neurogenesis; inhibits the genesis of neurons from precursor cells during cortical development presumably by antagonizing ARHGEF2. Unrelated to the role in retrograde microtubule-associated movement may play a role in the dimerization of cytoplasmic proteins/domains such as for ACVR2B. Binds to the cytoplasmic domain of ACVR2B and, in vitro, inhibits ACVR2B signaling. Involved in the regulation of mitotic spindle orientation. In Rattus norvegicus (Rat), this protein is Dynein light chain Tctex-type 1 (Dynlt1).